The following is a 642-amino-acid chain: Chaperone protein HtpG (642 aa).

An a; substrate-binding region spans residues 1 to 349; that stretch reads MSAATETEVR…SADLPLNVSR (349 aa). Residues 216-238 form a disordered region; sequence ELPPAPPAKEGEEPEPPKTPEWE. The span at 224 to 236 shows a compositional bias: basic and acidic residues; sequence KEGEEPEPPKTPE. The interval 350–570 is b; sequence EILQQNRQVE…AHDMSATLER (221 aa). The interval 571-642 is c; it reads LLKEAGQEVP…VKRLNKLLMG (72 aa).

It belongs to the heat shock protein 90 family. As to quaternary structure, homodimer.

Its subcellular location is the cytoplasm. In terms of biological role, molecular chaperone. Has ATPase activity. This chain is Chaperone protein HtpG, found in Magnetococcus marinus (strain ATCC BAA-1437 / JCM 17883 / MC-1).